Here is a 338-residue protein sequence, read N- to C-terminus: Glycerol-3-phosphate dehydrogenase [NAD(P)+] 1 (338 aa).

Residues serine 11, tryptophan 12, histidine 32, arginine 33, and lysine 109 each coordinate NADPH. Residues lysine 109, glycine 140, and serine 142 each contribute to the sn-glycerol 3-phosphate site. Position 144 (alanine 144) interacts with NADPH. Lysine 195, aspartate 248, serine 258, arginine 259, and asparagine 260 together coordinate sn-glycerol 3-phosphate. Lysine 195 (proton acceptor) is an active-site residue. An NADPH-binding site is contributed by arginine 259. NADPH-binding residues include valine 283 and glutamate 285.

Belongs to the NAD-dependent glycerol-3-phosphate dehydrogenase family.

The protein localises to the cytoplasm. The enzyme catalyses sn-glycerol 3-phosphate + NAD(+) = dihydroxyacetone phosphate + NADH + H(+). It carries out the reaction sn-glycerol 3-phosphate + NADP(+) = dihydroxyacetone phosphate + NADPH + H(+). It functions in the pathway membrane lipid metabolism; glycerophospholipid metabolism. Its function is as follows. Catalyzes the reduction of the glycolytic intermediate dihydroxyacetone phosphate (DHAP) to sn-glycerol 3-phosphate (G3P), the key precursor for phospholipid synthesis. This chain is Glycerol-3-phosphate dehydrogenase [NAD(P)+] 1, found in Lactobacillus delbrueckii subsp. bulgaricus (strain ATCC 11842 / DSM 20081 / BCRC 10696 / JCM 1002 / NBRC 13953 / NCIMB 11778 / NCTC 12712 / WDCM 00102 / Lb 14).